The chain runs to 198 residues: Peroxiredoxin-2 (198 aa).

The residue at position 2 (Ala2) is an N-acetylalanine. In terms of domain architecture, Thioredoxin spans 6 to 164; it reads ARIGKPAPDF…ALRLVQAFQY (159 aa). Cys51 functions as the Cysteine sulfenic acid (-SOH) intermediate in the catalytic mechanism. Ser112 carries the post-translational modification Phosphoserine. Position 182 is a phosphothreonine (Thr182). The residue at position 196 (Lys196) is an N6-acetyllysine.

It belongs to the peroxiredoxin family. AhpC/Prx1 subfamily. In terms of assembly, homodimer; disulfide-linked, upon oxidation. 5 homodimers assemble to form a ring-like decamer. Interacts with TIPIN. In terms of processing, the enzyme can be inactivated by further oxidation of the cysteine sulfenic acid (C(P)-SOH) to sulphinic acid (C(P)-SO2H) instead of its condensation to a disulfide bond. It can be reactivated by forming a transient disulfide bond with sulfiredoxin SRXN1, which reduces the cysteine sulfinic acid in an ATP- and Mg-dependent manner. Post-translationally, acetylation increases resistance to transition to high molecular-mass complexes. Deacetylated by HDAC6 which decreases reducing activity.

The protein resides in the cytoplasm. The catalysed reaction is a hydroperoxide + [thioredoxin]-dithiol = an alcohol + [thioredoxin]-disulfide + H2O. Its function is as follows. Thiol-specific peroxidase that catalyzes the reduction of hydrogen peroxide and organic hydroperoxides to water and alcohols, respectively. Plays a role in cell protection against oxidative stress by detoxifying peroxides and as sensor of hydrogen peroxide-mediated signaling events. Might participate in the signaling cascades of growth factors and tumor necrosis factor-alpha by regulating the intracellular concentrations of H(2)O(2). The chain is Peroxiredoxin-2 (PRDX2) from Macaca fascicularis (Crab-eating macaque).